Consider the following 211-residue polypeptide: Large ribosomal subunit protein uL4 (211 aa).

The segment at 48–89 (KRAGTASTKTRVEVRGGGAKPWRQKGTGRARAGSRTSPLWRG) is disordered.

This sequence belongs to the universal ribosomal protein uL4 family. In terms of assembly, part of the 50S ribosomal subunit.

Its function is as follows. One of the primary rRNA binding proteins, this protein initially binds near the 5'-end of the 23S rRNA. It is important during the early stages of 50S assembly. It makes multiple contacts with different domains of the 23S rRNA in the assembled 50S subunit and ribosome. In terms of biological role, forms part of the polypeptide exit tunnel. This Desulfotalea psychrophila (strain LSv54 / DSM 12343) protein is Large ribosomal subunit protein uL4.